Here is a 144-residue protein sequence, read N- to C-terminus: Transcriptional regulator SlyA (144 aa).

Positions 2-135 constitute an HTH marR-type domain; the sequence is ESPLGSDLAR…LIKLVAKLEH (134 aa). Positions 49–72 form a DNA-binding region, H-T-H motif; it reads QIQLAKAIGIEQPSLVRTLDQLED.

Belongs to the SlyA family. As to quaternary structure, homodimer.

Its function is as follows. Transcription regulator that can specifically activate or repress expression of target genes. Required to activate expression of virulent genes. This is Transcriptional regulator SlyA from Salmonella choleraesuis (strain SC-B67).